The following is a 170-amino-acid chain: ATP synthase subunit b (170 aa).

The helical transmembrane segment at 11 to 31 (GLNTGDIIFQLIAMLILLALL) threads the bilayer.

Belongs to the ATPase B chain family. In terms of assembly, F-type ATPases have 2 components, F(1) - the catalytic core - and F(0) - the membrane proton channel. F(1) has five subunits: alpha(3), beta(3), gamma(1), delta(1), epsilon(1). F(0) has three main subunits: a(1), b(2) and c(10-14). The alpha and beta chains form an alternating ring which encloses part of the gamma chain. F(1) is attached to F(0) by a central stalk formed by the gamma and epsilon chains, while a peripheral stalk is formed by the delta and b chains.

The protein resides in the cell membrane. F(1)F(0) ATP synthase produces ATP from ADP in the presence of a proton or sodium gradient. F-type ATPases consist of two structural domains, F(1) containing the extramembraneous catalytic core and F(0) containing the membrane proton channel, linked together by a central stalk and a peripheral stalk. During catalysis, ATP synthesis in the catalytic domain of F(1) is coupled via a rotary mechanism of the central stalk subunits to proton translocation. Functionally, component of the F(0) channel, it forms part of the peripheral stalk, linking F(1) to F(0). The sequence is that of ATP synthase subunit b from Bacillus pumilus (strain SAFR-032).